A 428-amino-acid chain; its full sequence is uncharacterized protein (428 aa).

H68 contributes to the Zn(2+) binding site. The Proton acceptor role is filled by E71. Zn(2+) contacts are provided by H72 and E143.

It belongs to the peptidase M16 family. It depends on Zn(2+) as a cofactor.

This is an uncharacterized protein from Bacillus subtilis (strain 168).